Consider the following 206-residue polypeptide: MGAKEVKPTRSELIELKKKIKLSEGGHKLLKMKRDGLILEFFDILSKAKDVRSELDAAYEKANVKIGIAESVEGRITIKSTAFAMKDAPQIVLESHNIMGVVVPKIESSSVRKPINKRGYGLLGTSSYIDEAVDSYEELVEKIILAAEIETTMKKLLDDIEKTKRRVNALEFKVIPELTEAMVFIRLRLEEMERENTFRLKRIKKA.

This sequence belongs to the V-ATPase D subunit family. As to quaternary structure, has multiple subunits with at least A(3), B(3), C, D, E, F, H, I and proteolipid K(x).

Its subcellular location is the cell membrane. Component of the A-type ATP synthase that produces ATP from ADP in the presence of a proton gradient across the membrane. The polypeptide is A-type ATP synthase subunit D (Methanococcoides burtonii (strain DSM 6242 / NBRC 107633 / OCM 468 / ACE-M)).